A 115-amino-acid chain; its full sequence is NAD(P)H-quinone oxidoreductase subunit M (115 aa).

It belongs to the complex I NdhM subunit family. As to quaternary structure, NDH-1 can be composed of about 15 different subunits; different subcomplexes with different compositions have been identified which probably have different functions.

It localises to the cellular thylakoid membrane. The catalysed reaction is a plastoquinone + NADH + (n+1) H(+)(in) = a plastoquinol + NAD(+) + n H(+)(out). It catalyses the reaction a plastoquinone + NADPH + (n+1) H(+)(in) = a plastoquinol + NADP(+) + n H(+)(out). NDH-1 shuttles electrons from an unknown electron donor, via FMN and iron-sulfur (Fe-S) centers, to quinones in the respiratory and/or the photosynthetic chain. The immediate electron acceptor for the enzyme in this species is believed to be plastoquinone. Couples the redox reaction to proton translocation, and thus conserves the redox energy in a proton gradient. Cyanobacterial NDH-1 also plays a role in inorganic carbon-concentration. This chain is NAD(P)H-quinone oxidoreductase subunit M, found in Prochlorococcus marinus (strain MIT 9301).